A 395-amino-acid polypeptide reads, in one-letter code: Phosphopentomutase (395 aa).

6 residues coordinate Mn(2+): Asp13, Asp288, His293, Asp329, His330, and His341.

The protein belongs to the phosphopentomutase family. It depends on Mn(2+) as a cofactor.

It localises to the cytoplasm. It catalyses the reaction 2-deoxy-alpha-D-ribose 1-phosphate = 2-deoxy-D-ribose 5-phosphate. The catalysed reaction is alpha-D-ribose 1-phosphate = D-ribose 5-phosphate. Its pathway is carbohydrate degradation; 2-deoxy-D-ribose 1-phosphate degradation; D-glyceraldehyde 3-phosphate and acetaldehyde from 2-deoxy-alpha-D-ribose 1-phosphate: step 1/2. In terms of biological role, isomerase that catalyzes the conversion of deoxy-ribose 1-phosphate (dRib-1-P) and ribose 1-phosphate (Rib-1-P) to deoxy-ribose 5-phosphate (dRib-5-P) and ribose 5-phosphate (Rib-5-P), respectively. This is Phosphopentomutase from Agathobacter rectalis (strain ATCC 33656 / DSM 3377 / JCM 17463 / KCTC 5835 / VPI 0990) (Eubacterium rectale).